A 164-amino-acid polypeptide reads, in one-letter code: Peptidyl-prolyl cis-trans isomerase A-like 4D (164 aa).

Positions 7-163 (FFEITRDGKP…KKITIADCGQ (157 aa)) constitute a PPIase cyclophilin-type domain.

The protein belongs to the cyclophilin-type PPIase family. PPIase A subfamily.

The protein resides in the cytoplasm. The catalysed reaction is [protein]-peptidylproline (omega=180) = [protein]-peptidylproline (omega=0). In terms of biological role, PPIases accelerate the folding of proteins. It catalyzes the cis-trans isomerization of proline imidic peptide bonds in oligopeptides. The sequence is that of Peptidyl-prolyl cis-trans isomerase A-like 4D from Homo sapiens (Human).